Reading from the N-terminus, the 178-residue chain is Large ribosomal subunit protein eL20 (178 aa).

The protein belongs to the eukaryotic ribosomal protein eL20 family.

This Castanea sativa (Sweet chestnut) protein is Large ribosomal subunit protein eL20 (RPL18A).